A 729-amino-acid chain; its full sequence is Fatty acid oxidation complex subunit alpha (729 aa).

An enoyl-CoA hydratase/isomerase region spans residues M1 to K189. D296 provides a ligand contact to substrate. Residues E311–A729 form a 3-hydroxyacyl-CoA dehydrogenase region. NAD(+) contacts are provided by residues M324, D343, V400 to E402, K407, and S429. The For 3-hydroxyacyl-CoA dehydrogenase activity role is filled by H450. N453 serves as a coordination point for NAD(+). 2 residues coordinate substrate: N500 and Y660. A disordered region spans residues T707 to A729.

In the N-terminal section; belongs to the enoyl-CoA hydratase/isomerase family. This sequence in the C-terminal section; belongs to the 3-hydroxyacyl-CoA dehydrogenase family. In terms of assembly, heterotetramer of two alpha chains (FadB) and two beta chains (FadA).

The enzyme catalyses a (3S)-3-hydroxyacyl-CoA + NAD(+) = a 3-oxoacyl-CoA + NADH + H(+). It catalyses the reaction a (3S)-3-hydroxyacyl-CoA = a (2E)-enoyl-CoA + H2O. The catalysed reaction is a 4-saturated-(3S)-3-hydroxyacyl-CoA = a (3E)-enoyl-CoA + H2O. It carries out the reaction (3S)-3-hydroxybutanoyl-CoA = (3R)-3-hydroxybutanoyl-CoA. The enzyme catalyses a (3Z)-enoyl-CoA = a 4-saturated (2E)-enoyl-CoA. It catalyses the reaction a (3E)-enoyl-CoA = a 4-saturated (2E)-enoyl-CoA. The protein operates within lipid metabolism; fatty acid beta-oxidation. In terms of biological role, involved in the aerobic and anaerobic degradation of long-chain fatty acids via beta-oxidation cycle. Catalyzes the formation of 3-oxoacyl-CoA from enoyl-CoA via L-3-hydroxyacyl-CoA. It can also use D-3-hydroxyacyl-CoA and cis-3-enoyl-CoA as substrate. This chain is Fatty acid oxidation complex subunit alpha, found in Salmonella typhi.